A 315-amino-acid chain; its full sequence is GTP cyclohydrolase MptA (315 aa).

Belongs to the GTP cyclohydrolase IV family. In terms of assembly, homodimer. It depends on Fe(2+) as a cofactor.

The enzyme catalyses GTP + H2O = 7,8-dihydroneopterin 2',3'-cyclic phosphate + formate + diphosphate + H(+). It functions in the pathway cofactor biosynthesis; 5,6,7,8-tetrahydromethanopterin biosynthesis. Its function is as follows. Converts GTP to 7,8-dihydro-D-neopterin 2',3'-cyclic phosphate, the first intermediate in the biosynthesis of coenzyme methanopterin. The protein is GTP cyclohydrolase MptA of Methanococcus maripaludis (strain C7 / ATCC BAA-1331).